The primary structure comprises 367 residues: AdoMet-dependent heme synthase (367 aa).

The 224-residue stretch at 15 to 238 folds into the Radical SAM core domain; the sequence is DGSPTCKLIA…TSMHLKATCA (224 aa). Residues Cys31, Cys35, and Cys38 each coordinate [4Fe-4S] cluster.

The protein belongs to the radical SAM superfamily. It depends on [4Fe-4S] cluster as a cofactor.

The catalysed reaction is Fe-coproporphyrin III + 2 S-adenosyl-L-methionine = heme b + 2 5'-deoxyadenosine + 2 L-methionine + 2 CO2. The protein operates within porphyrin-containing compound metabolism; protoheme biosynthesis. Functionally, involved in siroheme-dependent heme b biosynthesis. Catalyzes the conversion of Fe-coproporphyrin III into heme by the oxidative decarboxylation of two propionate side chains. This is AdoMet-dependent heme synthase from Nitratidesulfovibrio vulgaris (strain ATCC 29579 / DSM 644 / CCUG 34227 / NCIMB 8303 / VKM B-1760 / Hildenborough) (Desulfovibrio vulgaris).